The sequence spans 432 residues: CinA-like protein (432 aa).

Belongs to the CinA family.

This is CinA-like protein from Colwellia psychrerythraea (strain 34H / ATCC BAA-681) (Vibrio psychroerythus).